Consider the following 584-residue polypeptide: Long-chain-fatty-acid--AMP ligase FadD26 (584 aa).

The protein belongs to the ATP-dependent AMP-binding enzyme family.

It catalyses the reaction holo-[(phenol)carboxyphthiodiolenone synthase] + a long-chain fatty acid + ATP = a long-chain fatty acyl-[(phenol)carboxyphthiodiolenone synthase] + AMP + diphosphate. The enzyme catalyses eicosanoate + holo-[(phenol)carboxyphthiodiolenone synthase] + ATP = icosanoyl-[(phenol)carboxyphthiodiolenone synthase] + AMP + diphosphate. The catalysed reaction is holo-[(phenol)carboxyphthiodiolenone synthase] + docosanoate + ATP = docosanoyl-[(phenol)carboxyphthiodiolenone synthase] + AMP + diphosphate. Its pathway is lipid metabolism; fatty acid biosynthesis. Its function is as follows. Catalyzes the activation of long-chain fatty acids as acyl-adenylates (acyl-AMP), which are then transferred to the multifunctional polyketide synthase PpsA for further chain extension. Catalyzes the adenylation of the long-chain fatty acids eicosanoate (C20) or docosanoate (C22), and potentially the very-long-chain fatty acid lignocerate (C24). Involved in the biosynthesis of phthiocerol dimycocerosate (DIM A) and phthiodiolone dimycocerosate (DIM B). This chain is Long-chain-fatty-acid--AMP ligase FadD26, found in Mycobacterium marinum (strain ATCC BAA-535 / M).